Reading from the N-terminus, the 119-residue chain is Ig heavy chain V region T601 (119 aa).

One can recognise an Ig-like domain in the interval 1–112 (EVKLLESGGG…GYFDVWGAGT (112 aa)).

The polypeptide is Ig heavy chain V region T601 (Mus musculus (Mouse)).